The sequence spans 285 residues: Eukaryotic translation initiation factor 3 subunit F-2 (285 aa).

The 135-residue stretch at 11–145 (VFLKPLVLFQ…TRLYCAVEMG (135 aa)) folds into the MPN domain.

This sequence belongs to the eIF-3 subunit F family. In terms of assembly, component of the eukaryotic translation initiation factor 3 (eIF-3) complex. The eIF-3 complex interacts with pix.

It localises to the cytoplasm. In terms of biological role, component of the eukaryotic translation initiation factor 3 (eIF-3) complex, which is involved in protein synthesis of a specialized repertoire of mRNAs and, together with other initiation factors, stimulates binding of mRNA and methionyl-tRNAi to the 40S ribosome. The eIF-3 complex specifically targets and initiates translation of a subset of mRNAs involved in cell proliferation. This Drosophila sechellia (Fruit fly) protein is Eukaryotic translation initiation factor 3 subunit F-2.